A 115-amino-acid polypeptide reads, in one-letter code: Large ribosomal subunit protein bL20 (115 aa).

The protein belongs to the bacterial ribosomal protein bL20 family.

Its function is as follows. Binds directly to 23S ribosomal RNA and is necessary for the in vitro assembly process of the 50S ribosomal subunit. It is not involved in the protein synthesizing functions of that subunit. In Borrelia duttonii (strain Ly), this protein is Large ribosomal subunit protein bL20.